A 510-amino-acid polypeptide reads, in one-letter code: Histidine ammonia-lyase (510 aa).

A cross-link (5-imidazolinone (Ala-Gly)) is located at residues 143-145 (ASG). S144 is subject to 2,3-didehydroalanine (Ser).

It belongs to the PAL/histidase family. In terms of processing, contains an active site 4-methylidene-imidazol-5-one (MIO), which is formed autocatalytically by cyclization and dehydration of residues Ala-Ser-Gly.

The protein resides in the cytoplasm. It carries out the reaction L-histidine = trans-urocanate + NH4(+). The protein operates within amino-acid degradation; L-histidine degradation into L-glutamate; N-formimidoyl-L-glutamate from L-histidine: step 1/3. This is Histidine ammonia-lyase from Yersinia pseudotuberculosis serotype I (strain IP32953).